The following is a 351-amino-acid chain: Alanine racemase (351 aa).

K34 functions as the Proton acceptor; specific for D-alanine in the catalytic mechanism. N6-(pyridoxal phosphate)lysine is present on K34. R126 serves as a coordination point for substrate. The active-site Proton acceptor; specific for L-alanine is Y248. M296 contacts substrate.

The protein belongs to the alanine racemase family. Pyridoxal 5'-phosphate serves as cofactor.

It carries out the reaction L-alanine = D-alanine. It functions in the pathway amino-acid biosynthesis; D-alanine biosynthesis; D-alanine from L-alanine: step 1/1. Catalyzes the interconversion of L-alanine and D-alanine. May also act on other amino acids. The protein is Alanine racemase (alr) of Deinococcus radiodurans (strain ATCC 13939 / DSM 20539 / JCM 16871 / CCUG 27074 / LMG 4051 / NBRC 15346 / NCIMB 9279 / VKM B-1422 / R1).